The chain runs to 622 residues: Chaperone protein HscA homolog (622 aa).

The protein belongs to the heat shock protein 70 family.

Its function is as follows. Chaperone involved in the maturation of iron-sulfur cluster-containing proteins. Has a low intrinsic ATPase activity which is markedly stimulated by HscB. The chain is Chaperone protein HscA homolog from Burkholderia mallei (strain NCTC 10247).